The sequence spans 79 residues: Acyl carrier protein (79 aa).

The Carrier domain occupies 2–77; it reads STIEERVKKI…QAIDYVKVHV (76 aa). An O-(pantetheine 4'-phosphoryl)serine modification is found at Ser-37.

Belongs to the acyl carrier protein (ACP) family. 4'-phosphopantetheine is transferred from CoA to a specific serine of apo-ACP by AcpS. This modification is essential for activity because fatty acids are bound in thioester linkage to the sulfhydryl of the prosthetic group.

It localises to the cytoplasm. It functions in the pathway lipid metabolism; fatty acid biosynthesis. Its function is as follows. Carrier of the growing fatty acid chain in fatty acid biosynthesis. This chain is Acyl carrier protein, found in Xanthomonas albilineans.